Reading from the N-terminus, the 156-residue chain is Cyanate hydratase (156 aa).

Active-site residues include Arg-96, Glu-99, and Ser-122.

It belongs to the cyanase family.

The enzyme catalyses cyanate + hydrogencarbonate + 3 H(+) = NH4(+) + 2 CO2. Catalyzes the reaction of cyanate with bicarbonate to produce ammonia and carbon dioxide. This chain is Cyanate hydratase, found in Pseudomonas aeruginosa (strain LESB58).